A 334-amino-acid chain; its full sequence is Glycerol-3-phosphate dehydrogenase [NAD(P)+] (334 aa).

NADPH is bound by residues Tyr-14 and Lys-108. Residues Lys-108, Gly-140, and Ser-142 each contribute to the sn-glycerol 3-phosphate site. NADPH is bound at residue Ala-144. Sn-glycerol 3-phosphate-binding residues include Lys-195, Asp-248, Ser-258, Arg-259, and Asn-260. Catalysis depends on Lys-195, which acts as the Proton acceptor. An NADPH-binding site is contributed by Arg-259. Residue Glu-285 coordinates NADPH.

Belongs to the NAD-dependent glycerol-3-phosphate dehydrogenase family.

Its subcellular location is the cytoplasm. The catalysed reaction is sn-glycerol 3-phosphate + NAD(+) = dihydroxyacetone phosphate + NADH + H(+). The enzyme catalyses sn-glycerol 3-phosphate + NADP(+) = dihydroxyacetone phosphate + NADPH + H(+). It functions in the pathway membrane lipid metabolism; glycerophospholipid metabolism. Catalyzes the reduction of the glycolytic intermediate dihydroxyacetone phosphate (DHAP) to sn-glycerol 3-phosphate (G3P), the key precursor for phospholipid synthesis. The polypeptide is Glycerol-3-phosphate dehydrogenase [NAD(P)+] (Mesoplasma florum (strain ATCC 33453 / NBRC 100688 / NCTC 11704 / L1) (Acholeplasma florum)).